Here is a 600-residue protein sequence, read N- to C-terminus: Jacalin-related lectin 18 (600 aa).

Jacalin-type lectin domains are found at residues 12–158, 161–303, 304–447, and 454–597; these read TQRL…YFTC, PTRM…YFTT, SPFI…YFRL, and GEKV…HVLP.

It belongs to the jacalin lectin family.

The sequence is that of Jacalin-related lectin 18 (JAL18) from Arabidopsis thaliana (Mouse-ear cress).